The primary structure comprises 104 residues: ATP-dependent Clp protease adapter protein ClpS (104 aa).

It belongs to the ClpS family. Binds to the N-terminal domain of the chaperone ClpA.

Involved in the modulation of the specificity of the ClpAP-mediated ATP-dependent protein degradation. The chain is ATP-dependent Clp protease adapter protein ClpS from Burkholderia mallei (strain NCTC 10247).